A 309-amino-acid chain; its full sequence is Ribosomal RNA small subunit methyltransferase H (309 aa).

Residues 41-43 (GGH), Asp-61, Phe-85, Asp-102, and Gln-109 contribute to the S-adenosyl-L-methionine site.

The protein belongs to the methyltransferase superfamily. RsmH family.

The protein resides in the cytoplasm. It carries out the reaction cytidine(1402) in 16S rRNA + S-adenosyl-L-methionine = N(4)-methylcytidine(1402) in 16S rRNA + S-adenosyl-L-homocysteine + H(+). Specifically methylates the N4 position of cytidine in position 1402 (C1402) of 16S rRNA. The sequence is that of Ribosomal RNA small subunit methyltransferase H from Albidiferax ferrireducens (strain ATCC BAA-621 / DSM 15236 / T118) (Rhodoferax ferrireducens).